The following is a 703-amino-acid chain: Polyribonucleotide nucleotidyltransferase (703 aa).

Mg(2+)-binding residues include D485 and D491. In terms of domain architecture, KH spans 552 to 611; sequence PRIYTLKIDQDKIRDVIGKGGAMIRSITEASDTNIEIEDDGTIKIFATERAKADIAISKI. The region spanning 621–689 is the S1 motif domain; that stretch reads GKTYEGKVTR…RQNRVRLSIK (69 aa).

This sequence belongs to the polyribonucleotide nucleotidyltransferase family. Component of the RNA degradosome, which is a multiprotein complex involved in RNA processing and mRNA degradation. Mg(2+) serves as cofactor.

It is found in the cytoplasm. It carries out the reaction RNA(n+1) + phosphate = RNA(n) + a ribonucleoside 5'-diphosphate. Its function is as follows. Involved in mRNA degradation. Catalyzes the phosphorolysis of single-stranded polyribonucleotides processively in the 3'- to 5'-direction. The sequence is that of Polyribonucleotide nucleotidyltransferase from Pseudoalteromonas atlantica (strain T6c / ATCC BAA-1087).